A 464-amino-acid chain; its full sequence is UDP-N-acetylmuramoylalanine--D-glutamate ligase (464 aa).

127–133 (GSNGKST) is an ATP binding site.

Belongs to the MurCDEF family.

It localises to the cytoplasm. It catalyses the reaction UDP-N-acetyl-alpha-D-muramoyl-L-alanine + D-glutamate + ATP = UDP-N-acetyl-alpha-D-muramoyl-L-alanyl-D-glutamate + ADP + phosphate + H(+). It functions in the pathway cell wall biogenesis; peptidoglycan biosynthesis. Functionally, cell wall formation. Catalyzes the addition of glutamate to the nucleotide precursor UDP-N-acetylmuramoyl-L-alanine (UMA). The protein is UDP-N-acetylmuramoylalanine--D-glutamate ligase of Dinoroseobacter shibae (strain DSM 16493 / NCIMB 14021 / DFL 12).